A 1048-amino-acid chain; its full sequence is Transcription factor mef2A (1048 aa).

The MADS-box domain maps to 1–61 (MGRNKITIEK…NKLFQYSSRD (61 aa)). Residues 74–85 (DNTRKNLTNQDY) show a composition bias toward polar residues. Disordered regions lie at residues 74 to 263 (DNTR…QAAQ), 294 to 339 (QQQH…QQQQ), 386 to 812 (GIYG…NINT), and 916 to 1048 (LLLT…EPKN). The segment covering 97–110 (DDEDGDDDGDEDLG) has biased composition (acidic residues). Composition is skewed to low complexity over residues 130–205 (NNNN…NANH), 212–263 (GNSA…QAAQ), 294–303 (QQQHQQQQQN), 327–339 (QQQQQMQHSQQQQ), 393–437 (PPQM…IMNK), 446–466 (YYDYNGYPQQQQPPQNYNSNG), and 481–500 (QQQSANPYIQQQQQPQHQSP). Residues 249-304 (NNNSNGYQQQQQAAQQAVQQAQMAQQMHLQQQQQYQQLQHIQQQQQQQHQQQQQNM) are a coiled coil. A compositionally biased stretch (polar residues) spans 506 to 522 (YSPQQQSPVLNSQNGHH). Positions 529–539 (HQMHHQQHQHQ) are enriched in basic residues. Over residues 540–593 (QHPQMQQQQQQQQQHQQHPQMQQIQQQQHPQMQQHQQHQQQHPQMQQQHMNNHQ) the composition is skewed to low complexity. The span at 600–618 (NSSPEINSQKNVHSSPLIM) shows a compositional bias: polar residues. The span at 619 to 699 (NSNNNNNNNN…NSNNGNNNNN (81 aa)) shows a compositional bias: low complexity. The span at 715–736 (SSPTIPEQPSINVSTSSNSAHV) shows a compositional bias: polar residues. 3 stretches are compositionally biased toward low complexity: residues 738 to 802 (NNIT…SSST), 924 to 960 (SNNSNSSNNNNNNNNNNNNTNNNNISGNGSSSSSSSS), and 982 to 1029 (NNNN…NNSN).

It is found in the nucleus. In terms of biological role, transcription factor that regulates cell differentiation during development. Seems to negatively regulate prestalk gene expression and positively regulate prespore gene expression. In Dictyostelium discoideum (Social amoeba), this protein is Transcription factor mef2A (mef2A).